We begin with the raw amino-acid sequence, 347 residues long: ATPase GET3 (347 aa).

26 to 33 (KGGVGKTT) is an ATP binding site. Residue Asp57 is part of the active site. 2 residues coordinate ATP: Glu241 and Asn268. Cys279 and Cys282 together coordinate Zn(2+).

The protein belongs to the arsA ATPase family. As to quaternary structure, homodimer. Component of the Golgi to ER traffic (GET) complex, which is composed of GET1, GET2 and GET3. Within the complex, GET1 and GET2 form a heterotetramer which is stabilized by phosphatidylinositol binding and which binds to the GET3 homodimer. Interacts with the chloride channel protein GEF1.

The protein localises to the cytoplasm. The protein resides in the endoplasmic reticulum. It is found in the golgi apparatus. Functionally, ATPase required for the post-translational delivery of tail-anchored (TA) proteins to the endoplasmic reticulum. Recognizes and selectively binds the transmembrane domain of TA proteins in the cytosol. This complex then targets to the endoplasmic reticulum by membrane-bound receptors GET1 and GET2, where the tail-anchored protein is released for insertion. This process is regulated by ATP binding and hydrolysis. ATP binding drives the homodimer towards the closed dimer state, facilitating recognition of newly synthesized TA membrane proteins. ATP hydrolysis is required for insertion. Subsequently, the homodimer reverts towards the open dimer state, lowering its affinity for the GET1-GET2 receptor, and returning it to the cytosol to initiate a new round of targeting. Cooperates with the HDEL receptor ERD2 to mediate the ATP-dependent retrieval of resident ER proteins that contain a C-terminal H-D-E-L retention signal from the Golgi to the ER. Involved in low-level resistance to the oxyanions arsenite and arsenate, and in heat tolerance. This Meyerozyma guilliermondii (strain ATCC 6260 / CBS 566 / DSM 6381 / JCM 1539 / NBRC 10279 / NRRL Y-324) (Yeast) protein is ATPase GET3.